The chain runs to 101 residues: Small ribosomal subunit protein uS14 (101 aa).

It belongs to the universal ribosomal protein uS14 family. As to quaternary structure, part of the 30S ribosomal subunit. Contacts proteins S3 and S10.

Its function is as follows. Binds 16S rRNA, required for the assembly of 30S particles and may also be responsible for determining the conformation of the 16S rRNA at the A site. This chain is Small ribosomal subunit protein uS14, found in Neorickettsia sennetsu (strain ATCC VR-367 / Miyayama) (Ehrlichia sennetsu).